The sequence spans 860 residues: Leucine--tRNA ligase (860 aa).

A 'HIGH' region motif is present at residues 42–52; it reads PYPSGRLHMGH. The 'KMSKS' region motif lies at 619 to 623; the sequence is KMSKS. Position 622 (lysine 622) interacts with ATP.

The protein belongs to the class-I aminoacyl-tRNA synthetase family.

The protein localises to the cytoplasm. The enzyme catalyses tRNA(Leu) + L-leucine + ATP = L-leucyl-tRNA(Leu) + AMP + diphosphate. The chain is Leucine--tRNA ligase from Salmonella agona (strain SL483).